The sequence spans 349 residues: Oxygen-dependent coproporphyrinogen-III oxidase (349 aa).

2 disordered regions span residues 1–21 (MGAS…KRAR) and 37–60 (SLDG…GRSK). Serine 105 is a binding site for substrate. Histidine 109 and histidine 119 together coordinate a divalent metal cation. The active-site Proton donor is histidine 119. Residue 121–123 (NYR) participates in substrate binding. 2 residues coordinate a divalent metal cation: histidine 153 and histidine 183. The important for dimerization stretch occupies residues 273 to 308 (YAEFNLVWDRGTIFGLQTNGRTESILMSLPPLARWE).

This sequence belongs to the aerobic coproporphyrinogen-III oxidase family. As to quaternary structure, homodimer. Requires a divalent metal cation as cofactor.

The protein resides in the cytoplasm. It catalyses the reaction coproporphyrinogen III + O2 + 2 H(+) = protoporphyrinogen IX + 2 CO2 + 2 H2O. It participates in porphyrin-containing compound metabolism; protoporphyrin-IX biosynthesis; protoporphyrinogen-IX from coproporphyrinogen-III (O2 route): step 1/1. In terms of biological role, involved in the heme and chlorophyll biosynthesis. Catalyzes the aerobic oxidative decarboxylation of propionate groups of rings A and B of coproporphyrinogen-III to yield the vinyl groups in protoporphyrinogen-IX. The chain is Oxygen-dependent coproporphyrinogen-III oxidase from Prochlorococcus marinus (strain MIT 9313).